We begin with the raw amino-acid sequence, 79 residues long: MASSGKCVFLVFLCMVALLAPSEVHAKSMVEVNAAHKWYIVEGLCSKFPDCNKHCKEQKFPGGTCLKLGVNMMCTCIYS.

The N-terminal stretch at 1-26 (MASSGKCVFLVFLCMVALLAPSEVHA) is a signal peptide. 3 disulfide bridges follow: Cys-45–Cys-65, Cys-51–Cys-74, and Cys-55–Cys-76.

The protein belongs to the DEFL family.

The protein localises to the secreted. The polypeptide is Putative defensin-like protein 29 (Arabidopsis thaliana (Mouse-ear cress)).